The chain runs to 550 residues: MFCVQCEQTIRTPAGNGCSYSQGMCGKTAETSDLQDLLIAALQGLSAWAAKAREYGIVDHYVDNFAPRAFFSTLTNVNFDSPRIVGYAREAIALREALKAQSLNADANAAVDNPMADLQLVSDDLGDLQRQAAEFTPNKDKAAIGENILGLRLLCLYGLKGAAAYMEHAHVLGQYDNDIYAQYHKIMAWLGTWPSDMNALLECSMEIGQMNFKVMSILDAGETDTYGHPTPTQVNVKATAGKCILISGHDLKDLYNLLQQTEGTGVNVYTHGEMLPAHGYPELRKFKHLVGNYGSGWQNQQVEFARFPGPIVMTSNCIIDPTVGSYDDRIWTRSIVGWPGVSHLEGDDFAPVITQAQQMAGFPFSEIEHMITVGFGRETLLGAADSLIDLVSREKLRHIFLVGGCDGARGERNYFTDFATSVPQDCLILTLACGKYRFNKLDFGDIEGLPRLIDAGQCNDAYSAIILAVTLAEKLGCGVNDLPLSLVLSWFEQKAIVILLTLLSLGVTNIVTGPTAPGFLTPDLLAVLNEKFGLRSVTTVEEDMQQLLSA.

Positions 3, 6, 18, and 25 each coordinate [2Fe-2S] cluster. Hybrid [4Fe-2O-2S] cluster contacts are provided by His249, Glu273, Cys317, Cys405, Cys433, Cys458, Glu492, and Lys494. Cysteine persulfide is present on Cys405.

The protein belongs to the HCP family. Requires [2Fe-2S] cluster as cofactor. It depends on hybrid [4Fe-2O-2S] cluster as a cofactor.

The protein localises to the cytoplasm. The catalysed reaction is A + NH4(+) + H2O = hydroxylamine + AH2 + H(+). Its function is as follows. Catalyzes the reduction of hydroxylamine to form NH(3) and H(2)O. The protein is Hydroxylamine reductase of Enterobacter sp. (strain 638).